A 675-amino-acid chain; its full sequence is MAAVLRSLRRRDVASATFSAYRSLTGSTKPAYVAQKWSCLARPFSSRPAGNDVIGIDLGTTNSCVSVMEGKNPKVIENSEGARTTPSVVAFNQKGELLVGTPAKRQAVTNPTNTVFGTKRLIGRRFDDPQTQKEMKMVPFKIVKAPNGDAWVEANGQQYSPSQIGAFVLTKMKETAEAYLGKSVSKAVITVPAYFNDAQRQATKDAGRIAGLDVQRIINEPTAAALSYGMNNKEGLIAVFDLGGGTFDVSILEISNGVFEVKATNGDTFLGGEDFDNALLDFLVNEFKRTESIDLSKDRLALQRLREAAEKAKIELSSTSQTEINLPFITADASGAKHLNITLTRSKFEALVNHLIERTKAPCKSCLKDANVSIKDVDEVLLVGGMTRVPKVQEVVLNIFGKSPSKGVNPDEAVAMGAAIQGGILRGDVKELLLLDVTPLSLGIETLGGIFTRLINRNTTIPTKKSQVFSTAADNQTQVGIKVLQGEREMASDNKMLGEFDLVGIPPAPRGLPQIEVTFDIDANGIVTVSAKDKSTGKEQQITIRSSGGLSEDEIEKMVKEAELHAQKDQERKTLIDIRNSADTTIYSIEKSLGEYREKIPSETAKEIEDAVSDLRKAMSGDNVDEIKSKLDAANKAVSKIGEHMSGGSSGGSSAGGSQGGGDQAPEAEYEEVKK.

A mitochondrion-targeting transit peptide spans 1-51; that stretch reads MAAVLRSLRRRDVASATFSAYRSLTGSTKPAYVAQKWSCLARPFSSRPAGN. The interval 638-675 is disordered; the sequence is VSKIGEHMSGGSSGGSSAGGSQGGGDQAPEAEYEEVKK. The segment covering 648–663 has biased composition (gly residues); that stretch reads GSSGGSSAGGSQGGGD. Acidic residues predominate over residues 666 to 675; that stretch reads PEAEYEEVKK.

Belongs to the heat shock protein 70 family.

It localises to the mitochondrion. The chain is Heat shock 70 kDa protein, mitochondrial from Phaseolus vulgaris (Kidney bean).